A 37-amino-acid polypeptide reads, in one-letter code: Cytochrome b6-f complex subunit 5 (37 aa).

Residues 5 to 25 (LLSGIVPGLIPITLAGSFVIA) form a helical membrane-spanning segment.

Belongs to the PetG family. As to quaternary structure, the 4 large subunits of the cytochrome b6-f complex are cytochrome b6, subunit IV (17 kDa polypeptide, PetD), cytochrome f and the Rieske protein, while the 4 small subunits are PetG, PetL, PetM and PetN. The complex functions as a dimer.

Its subcellular location is the plastid membrane. In terms of biological role, component of the cytochrome b6-f complex, which mediates electron transfer between photosystem II (PSII) and photosystem I (PSI), cyclic electron flow around PSI, and state transitions. PetG is required for either the stability or assembly of the cytochrome b6-f complex. The protein is Cytochrome b6-f complex subunit 5 of Aneura mirabilis (Parasitic liverwort).